An 89-amino-acid chain; its full sequence is HssA/B-like protein DDB_G0295685 (89 aa).

The protein belongs to the hssA/B family.

This chain is HssA/B-like protein DDB_G0295685, found in Dictyostelium discoideum (Social amoeba).